We begin with the raw amino-acid sequence, 192 residues long: Segregation and condensation protein B (192 aa).

It belongs to the ScpB family. As to quaternary structure, homodimer. Homodimerization may be required to stabilize the binding of ScpA to the Smc head domains. Component of a cohesin-like complex composed of ScpA, ScpB and the Smc homodimer, in which ScpA and ScpB bind to the head domain of Smc. The presence of the three proteins is required for the association of the complex with DNA.

It is found in the cytoplasm. In terms of biological role, participates in chromosomal partition during cell division. May act via the formation of a condensin-like complex containing Smc and ScpA that pull DNA away from mid-cell into both cell halves. In Oceanobacillus iheyensis (strain DSM 14371 / CIP 107618 / JCM 11309 / KCTC 3954 / HTE831), this protein is Segregation and condensation protein B.